Consider the following 915-residue polypeptide: Scaffold attachment factor B1 (915 aa).

Residues 1–24 are compositionally biased toward low complexity; that stretch reads MAETLSGLGDSGAAGAAALSSASS. Positions 1–33 are disordered; that stretch reads MAETLSGLGDSGAAGAAALSSASSETGTRRLSD. A2 is subject to N-acetylalanine. A phosphoserine mark is found at S24 and S55. One can recognise an SAP domain in the interval 31-65; that stretch reads LSDLRVIDLRAELRKRNVDSSGNKSVLMERLKKAI. The tract at residues 64 to 118 is disordered; it reads AIEDEGGNPDEIEITSEGNKKTSKRSSKGRKPEEEGVEDNGLEENSGDGQEDVET. Acidic residues predominate over residues 67 to 77; that stretch reads DEGGNPDEIEI. S79 is subject to Phosphoserine. Positions 98-118 are enriched in acidic residues; that stretch reads EGVEDNGLEENSGDGQEDVET. Residues K172 and K186 each participate in a glycyl lysine isopeptide (Lys-Gly) (interchain with G-Cter in SUMO2) cross-link. T188 bears the Phosphothreonine mark. Phosphoserine is present on residues S195, S197, and S209. Residues 221–407 are disordered; the sequence is LGETCKSEPV…EKGRSSCGRN (187 aa). Over residues 225-234 the composition is skewed to basic and acidic residues; it reads CKSEPVKEES. K231 is covalently cross-linked (Glycyl lysine isopeptide (Lys-Gly) (interchain with G-Cter in SUMO)). A compositionally biased stretch (polar residues) spans 275-286; that stretch reads SESTAHAQSSKA. Residues 293-309 show a composition bias toward basic and acidic residues; the sequence is VKREPAEQPGDGERTDC. K294 participates in a covalent cross-link: Glycyl lysine isopeptide (Lys-Gly) (interchain with G-Cter in SUMO). Positions 319-330 are enriched in low complexity; sequence EQSSAASELAEA. The span at 346–359 shows a compositional bias: basic and acidic residues; sequence EARDSKEDGRKFDF. The span at 371–383 shows a compositional bias: polar residues; it reads ESSTSEGADQKMS. Residue K381 forms a Glycyl lysine isopeptide (Lys-Gly) (interchain with G-Cter in SUMO2) linkage. Residues S383 and S384 each carry the phosphoserine modification. Residues 390-401 are compositionally biased toward basic and acidic residues; sequence DTKRLSKEEKGR. K392 is covalently cross-linked (Glycyl lysine isopeptide (Lys-Gly) (interchain with G-Cter in SUMO2)). The 79-residue stretch at 406–484 folds into the RRM domain; it reads RNFWVSGLSS…KMISVEKAKN (79 aa). S415 bears the Phosphoserine mark. 2 stretches are compositionally biased toward basic and acidic residues: residues 477–551 and 559–570; these read ISVE…ERSR and GTERTVVMDKSK. Disordered regions lie at residues 477–641, 671–708, and 749–915; these read ISVE…EREE, RERMHVEHERRREQERIHREREELRRQQELRYEQERRP, and FDHR…TRRY. Residues K483, K514, K543, and K570 each participate in a glycyl lysine isopeptide (Lys-Gly) (interchain with G-Cter in SUMO2) cross-link. The tract at residues 528–792 is interaction with POLR2A. Interaction with SFRS1; SFRS9 and SFRS10; the sequence is GDDGSGEKSK…RHGGPERHGR (265 aa). A Glycyl lysine isopeptide (Lys-Gly) (interchain with G-Cter in SUMO1); alternate cross-link involves residue K578. K578 participates in a covalent cross-link: Glycyl lysine isopeptide (Lys-Gly) (interchain with G-Cter in SUMO2); alternate. 4 positions are modified to phosphoserine: S580, S582, S601, and S604. Basic and acidic residues predominate over residues 581 to 641; it reads GSKERASKSQ…RMQAQWEREE (61 aa). Positions 599 to 616 match the Nuclear localization signal motif; the sequence is KRSVVSFDKVKEPRKSRD. The tract at residues 599 to 915 is interaction with SAFB2; the sequence is KRSVVSFDKV…PSDARFTRRY (317 aa). Residue K607 is modified to N6-acetyllysine. The span at 749 to 796 shows a compositional bias: basic and acidic residues; that stretch reads FDHRDRGRYPDHSVDRREGSRSMMGEREGQHYPERHGGPERHGRDSRD. R811 carries the omega-N-methylarginine modification. 2 stretches are compositionally biased toward basic and acidic residues: residues 817-832 and 841-851; these read PRRDWGDHGRREDDRS and MMDRDHKRWQG. Residue K847 forms a Glycyl lysine isopeptide (Lys-Gly) (interchain with G-Cter in SUMO2) linkage. Residues R868, R874, and R884 each carry the asymmetric dimethylarginine modification. Residues 892 to 901 show a composition bias toward gly residues; the sequence is GMQGGFGGQS. Positions 905-915 are enriched in basic and acidic residues; the sequence is RPSDARFTRRY.

As to quaternary structure, monomer and homodimer. Forms heterodimers with SAFB2. Interacts with KHDRBS3. Interacts with CLK2. Interacts with POLR2A, SRSF1/ASF, SRSF9/SRp30c and SFSF10/TRA2B. Interacts with isoform 1 and isoform 2 of SRPK1 and inhibits its activity. Interacts with RBMX. Interacts with FUS. Interacts with ZBED4. In terms of processing, sumoylated by PIAS1 with SUMO1 and SUMO2/3, desumoylated by SENP1. Sumoylation is required for transcriptional repressor activity. In terms of tissue distribution, ubiquitous. Expressed at high levels in the CNS and at low levels in the liver. Expressed in a wide number of breast cancer cell lines.

It is found in the nucleus. Binds to scaffold/matrix attachment region (S/MAR) DNA and forms a molecular assembly point to allow the formation of a 'transcriptosomal' complex (consisting of SR proteins and RNA polymerase II) coupling transcription and RNA processing. Functions as an estrogen receptor corepressor and can also bind to the HSP27 promoter and decrease its transcription. Thereby acts as a negative regulator of cell proliferation. When associated with RBMX, binds to and stimulates transcription from the SREBF1 promoter. The sequence is that of Scaffold attachment factor B1 (SAFB) from Homo sapiens (Human).